A 292-amino-acid chain; its full sequence is Nitrogenase iron protein (292 aa).

10 to 17 contacts ATP; it reads GKGGIGKS. Cys-98 is a binding site for [4Fe-4S] cluster. The residue at position 101 (Arg-101) is an ADP-ribosylarginine; by dinitrogenase reductase ADP-ribosyltransferase. Cys-133 serves as a coordination point for [4Fe-4S] cluster.

Belongs to the NifH/BchL/ChlL family. Homodimer. [4Fe-4S] cluster serves as cofactor. Post-translationally, the reversible ADP-ribosylation of Arg-101 inactivates the nitrogenase reductase and regulates nitrogenase activity.

The enzyme catalyses N2 + 8 reduced [2Fe-2S]-[ferredoxin] + 16 ATP + 16 H2O = H2 + 8 oxidized [2Fe-2S]-[ferredoxin] + 2 NH4(+) + 16 ADP + 16 phosphate + 6 H(+). Its function is as follows. The key enzymatic reactions in nitrogen fixation are catalyzed by the nitrogenase complex, which has 2 components: the iron protein and the molybdenum-iron protein. This chain is Nitrogenase iron protein, found in Teredinibacter turnerae (strain ATCC 39867 / T7901).